The sequence spans 79 residues: Acyl carrier protein 1 (79 aa).

A Carrier domain is found at 2 to 77 (DNIEQRVKKI…QAIDYARANV (76 aa)). The residue at position 37 (Ser37) is an O-(pantetheine 4'-phosphoryl)serine.

It belongs to the acyl carrier protein (ACP) family. Post-translationally, 4'-phosphopantetheine is transferred from CoA to a specific serine of apo-ACP by AcpS. This modification is essential for activity because fatty acids are bound in thioester linkage to the sulfhydryl of the prosthetic group.

The protein resides in the cytoplasm. The protein operates within lipid metabolism; fatty acid biosynthesis. Functionally, carrier of the growing fatty acid chain in fatty acid biosynthesis. This chain is Acyl carrier protein 1, found in Ralstonia nicotianae (strain ATCC BAA-1114 / GMI1000) (Ralstonia solanacearum).